Reading from the N-terminus, the 364-residue chain is Putative methylthioribose-1-phosphate isomerase (364 aa).

Substrate contacts are provided by residues 57–59 (RGA), arginine 100, and glutamine 206. Residue aspartate 247 is the Proton donor of the active site. 257 to 258 (NK) contacts substrate.

Belongs to the eIF-2B alpha/beta/delta subunits family. MtnA subfamily.

The enzyme catalyses 5-(methylsulfanyl)-alpha-D-ribose 1-phosphate = 5-(methylsulfanyl)-D-ribulose 1-phosphate. Catalyzes the interconversion of methylthioribose-1-phosphate (MTR-1-P) into methylthioribulose-1-phosphate (MTRu-1-P). This Pyrococcus horikoshii (strain ATCC 700860 / DSM 12428 / JCM 9974 / NBRC 100139 / OT-3) protein is Putative methylthioribose-1-phosphate isomerase.